A 675-amino-acid chain; its full sequence is Potassium-transporting ATPase ATP-binding subunit (675 aa).

Transmembrane regions (helical) follow at residues 34-54 (IMFV…FPDI), 65-85 (LITI…SEAF), 216-236 (IALF…IVTL), and 245-265 (LILP…TTIG). The active-site 4-aspartylphosphate intermediate is the D304. ATP is bound by residues D341, E345, 372 to 379 (FTAETRMS), and K390. Residues D513 and D517 each contribute to the Mg(2+) site. Helical transmembrane passes span 569 to 591 (ALTT…ALMM), 611 to 631 (AIIS…PIAM), and 644 to 664 (IFIN…FLGI).

It belongs to the cation transport ATPase (P-type) (TC 3.A.3) family. Type IA subfamily. In terms of assembly, the system is composed of three essential subunits: KdpA, KdpB and KdpC.

It is found in the cell membrane. The catalysed reaction is K(+)(out) + ATP + H2O = K(+)(in) + ADP + phosphate + H(+). Its function is as follows. Part of the high-affinity ATP-driven potassium transport (or Kdp) system, which catalyzes the hydrolysis of ATP coupled with the electrogenic transport of potassium into the cytoplasm. This subunit is responsible for energy coupling to the transport system and for the release of the potassium ions to the cytoplasm. The polypeptide is Potassium-transporting ATPase ATP-binding subunit (Staphylococcus aureus (strain Newman)).